The sequence spans 161 residues: 18.3 kDa class I heat shock protein (161 aa).

The sHSP domain maps to 48-161 (ETAAFANARI…KPQVKAINVY (114 aa)).

The protein belongs to the small heat shock protein (HSP20) family. Forms oligomeric structures.

Its subcellular location is the cytoplasm. This Oxybasis rubra (Red goosefoot) protein is 18.3 kDa class I heat shock protein (HSP18).